Consider the following 450-residue polypeptide: ATP-dependent protease ATPase subunit HslU (450 aa).

ATP contacts are provided by residues valine 29, 71 to 76, aspartate 261, glutamate 328, and arginine 400; that span reads GVGKTE.

The protein belongs to the ClpX chaperone family. HslU subfamily. As to quaternary structure, a double ring-shaped homohexamer of HslV is capped on each side by a ring-shaped HslU homohexamer. The assembly of the HslU/HslV complex is dependent on binding of ATP.

Its subcellular location is the cytoplasm. Its function is as follows. ATPase subunit of a proteasome-like degradation complex; this subunit has chaperone activity. The binding of ATP and its subsequent hydrolysis by HslU are essential for unfolding of protein substrates subsequently hydrolyzed by HslV. HslU recognizes the N-terminal part of its protein substrates and unfolds these before they are guided to HslV for hydrolysis. In Rickettsia prowazekii (strain Madrid E), this protein is ATP-dependent protease ATPase subunit HslU.